Consider the following 425-residue polypeptide: Calreticulin-1 (425 aa).

Positions 1–22 (MAKLNPKFISLILFALVVIVSA) are cleaved as a signal peptide. Asparagine 59 is a glycosylation site (N-linked (GlcNAc...) asparagine). Cysteines 108 and 140 form a disulfide. Residues tyrosine 112, lysine 114, tyrosine 131, and aspartate 138 each contribute to the an alpha-D-glucoside site. The N-linked (GlcNAc...) asparagine glycan is linked to asparagine 154. 7 consecutive repeat copies span residues 194–205 (KQTGSLYSDWDL), 213–224 (DPSAKKPEDWDD), 230–241 (DPEDTKPAGYDD), 248–259 (DTDAKKPEDWDD), 263–273 (GEWTAPTIPNP), 277–287 (GEWKPKKIKNP), and 291–301 (GKWKAPMIDNP). Residues 194–259 (KQTGSLYSDW…DAKKPEDWDD (66 aa)) form a 4 X approximate repeats region. Basic and acidic residues-rich tracts occupy residues 213–235 (DPSAKKPEDWDDKEYIPDPEDTK) and 241–255 (DIPKEIPDTDAKKPE). The disordered stretch occupies residues 213-281 (DPSAKKPEDW…NPEYNGEWKP (69 aa)). The tract at residues 263-301 (GEWTAPTIPNPEYNGEWKPKKIKNPAYKGKWKAPMIDNP) is 3 X approximate repeats. Glutamate 321 is an an alpha-D-glucoside binding site. Residues 348–378 (EETWGKHKDAEKAAFDEAEKKREEEESKDAP) are compositionally biased toward basic and acidic residues. A disordered region spans residues 348 to 425 (EETWGKHKDA…EETDAAHDEL (78 aa)). Residues 379 to 398 (AESDAEEEAEDDDNEGDDSD) are compositionally biased toward acidic residues. Serine 381 and serine 397 each carry phosphoserine. A glycan (N-linked (GlcNAc...) asparagine) is linked at asparagine 399. Positions 399–412 (NESKSEETKEAEET) are enriched in basic and acidic residues. Residues 422–425 (HDEL) carry the Prevents secretion from ER motif.

This sequence belongs to the calreticulin family.

Its subcellular location is the endoplasmic reticulum lumen. Functionally, molecular calcium-binding chaperone promoting folding, oligomeric assembly and quality control in the ER via the calreticulin/calnexin cycle. This lectin may interact transiently with almost all of the monoglucosylated glycoproteins that are synthesized in the ER. The protein is Calreticulin-1 (CRT1) of Arabidopsis thaliana (Mouse-ear cress).